Here is a 199-residue protein sequence, read N- to C-terminus: UPF0301 protein Vapar_4617 (199 aa).

The protein belongs to the UPF0301 (AlgH) family.

This chain is UPF0301 protein Vapar_4617, found in Variovorax paradoxus (strain S110).